We begin with the raw amino-acid sequence, 67 residues long: uncharacterized protein (67 aa).

The next 2 membrane-spanning stretches (helical) occupy residues 8–28 (MWFA…IYLS) and 41–61 (ISSF…VVVF).

The protein resides in the cell membrane. This is an uncharacterized protein from Bacillus subtilis (strain 168).